Consider the following 246-residue polypeptide: Mast cell protease 4 (246 aa).

Positions 1-18 (MQALLFLMALLLPSGAGA) are cleaved as a signal peptide. Positions 19–20 (EE) are cleaved as a propeptide — activation peptide. A Peptidase S1 domain is found at 21 to 244 (IIGGVESRPH…YVPWINRVIK (224 aa)). Cys-50 and Cys-66 are joined by a disulfide. Active-site charge relay system residues include His-65 and Asp-109. 2 disulfides stabilise this stretch: Cys-143–Cys-208 and Cys-174–Cys-187. The active-site Charge relay system is the Ser-202.

This sequence belongs to the peptidase S1 family. Granzyme subfamily. Monomer. Interacts with iripin-2, a serine protease inhibitor from Ixodes ricinus saliva. In terms of tissue distribution, submucosal mast cells. In femoral muscle, detected in myocytes but not in mast cells.

Completely inhibited by serine protease inhibitors such as chymostatin, diisopropylfluorophosphate and phenylmethylsulfonyl fluoride, but not by p-tosyl-L-phenylalanine chloromethyl ketone, p-tosyl-L-lysine chloromethyl ketone, pepstatin, E-64, EDTA or o-phenanthroline. Also inhibited by lima bean trypsin inhibitor, soy bean trypsin inhibitor and human plasma alpha1-antichymotrypsin. Functionally, has chymotrypsin-like activity. Hydrolyzes the amide bonds of synthetic substrates having Tyr and Phe residues at the P1 position. Preferentially hydrolyzes the 'Tyr-4-|-Ile-5' bond of angiotensin I and the 'Phe-20-|-Ala-21' bond of amyloid beta-protein, and is less active towards the 'Phe-8-|-His-9' bond of angiotensin I and the 'Phe-4-|-Ala-5' and 'Tyr-10-|-Glu-11' bonds of amyloid beta-protein. Involved in thrombin regulation and fibronectin processing. This Mus musculus (Mouse) protein is Mast cell protease 4 (Mcpt4).